The sequence spans 196 residues: MNEAVSPGALSTLFTDARTHNGWRETPVSDETLREIYALMKWGPTSANCSPTRIVFIRTAEGKERLRPALSSGNLQKTLTAPVTAIVAWDSEFYERLPQLFPHGDARSWFTSSPQLAEETAFRNSSMQAAYLIVACRALGLDTGPMSGFDRQYVDDAFFAGSTLKSNLLINIGYGDSSKLFARLPRLSFEEACGLL.

This sequence belongs to the nitroreductase family. HadB/RutE subfamily. It depends on FMN as a cofactor.

The catalysed reaction is 3-hydroxypropanoate + NADP(+) = 3-oxopropanoate + NADPH + H(+). Its function is as follows. May reduce toxic product malonic semialdehyde to 3-hydroxypropionic acid, which is excreted. The sequence is that of Probable malonic semialdehyde reductase RutE from Escherichia coli O6:H1 (strain CFT073 / ATCC 700928 / UPEC).